The sequence spans 160 residues: Prorelaxin (160 aa).

Intrachain disulfides connect Cys-10/Cys-147, Cys-22/Cys-160, and Cys-146/Cys-151. The propeptide at 34 to 133 (QEKQRILGSG…KDFNLNIYSP (100 aa)) is connecting peptide.

Belongs to the insulin family. Heterodimer of a B chain and an A chain linked by two disulfide bonds. As to expression, expressed in the endometrium during pregnancy and in mammary gland during lactation.

It is found in the secreted. In terms of biological role, relaxin is an ovarian hormone that acts with estrogen to produce dilatation of the birth canal in many mammals. It bears mature young, and allows separation of the pelvic bones. This is Prorelaxin (RLN) from Cavia porcellus (Guinea pig).